We begin with the raw amino-acid sequence, 699 residues long: UvrABC system protein C (699 aa).

Residues 1–51 are compositionally biased toward low complexity; sequence MIQHPTDTPEVAADAAAEPERAAGAAGATPQPSQDAVEPAADVDAATASLA. Positions 1–59 are disordered; it reads MIQHPTDTPEVAADAAAEPERAAGAAGATPQPSQDAVEPAADVDAATASLAAEDDDEPV. The GIY-YIG domain occupies 92-170; sequence TSPGVYRMLN…IKQLRPRFNV (79 aa). Residues 280 to 315 enclose the UVR domain; the sequence is RLVKQELAGEMEKASAELEFETAALYRDRLAALSAI.

The protein belongs to the UvrC family. In terms of assembly, interacts with UvrB in an incision complex.

It localises to the cytoplasm. Its function is as follows. The UvrABC repair system catalyzes the recognition and processing of DNA lesions. UvrC both incises the 5' and 3' sides of the lesion. The N-terminal half is responsible for the 3' incision and the C-terminal half is responsible for the 5' incision. This chain is UvrABC system protein C, found in Rhodopseudomonas palustris (strain BisB18).